The primary structure comprises 577 residues: MAEAGAGFLEQLKSCIVWSWTYLWTVWFFLVLFLVYILRVPLRINDNLSTVSMFLNTLTPKFYVALTGTSSLISGLILIFEWWYFRKYGTSFIEQVSVSHLRPLLGGVDNNSSNNSNSSNGDSDSNRQSVSECKVWRNPLNLFRGAEYNRYTWVTGREPLTYYDMNLSAQDHQTFFTCDSDHLRPADAIMQKAWRERNPQARISAAHEALEINEIRSRVEVPLIASSTIWEIKLLPKCATAYILLAEEEATTIAEAEKLFKQALKAGDGCYRRSQQLQHHGSQYEAQHRRDTNVLVYIKRRLAMCARRLGRTREAVKMMRDLMKEFPLLSMFNIHENLLEALLELQAYADVQAVLAKYDDISLPKSATICYTAALLKARAVSDKFSPEAASRRGLSTAEMNAVEAIHRAVEFNPHVPKYLLEMKSLILPPEHILKRGDSEAIAYAFFHLAHWKRVEGALNLLHCTWEGTFRMIPYPLEKGHLFYPYPICTETADRELLPSFHEVSVYPKKELPFFILFTAGLCSFTAMLALLTHQFPELMGVFAKAFLSTLFAPLNFVMEKVESILPSSLWHQLTRI.

The helical transmembrane segment at 15–35 (CIVWSWTYLWTVWFFLVLFLV) threads the bilayer. Asn47 is a glycosylation site (N-linked (GlcNAc...) asparagine). The helical transmembrane segment at 62–82 (FYVALTGTSSLISGLILIFEW) threads the bilayer. At Ser386 the chain carries Phosphoserine. 2 helical membrane-spanning segments follow: residues 512–532 (LPFF…LALL) and 539–559 (LMGV…NFVM).

The protein belongs to the ST7 family.

The protein resides in the membrane. This Mus musculus (Mouse) protein is Suppressor of tumorigenicity 7 protein (St7).